Consider the following 174-residue polypeptide: MSESESASHEMREPYLEKVVVHMGVGQGGEPLADAEEIIEEITDQQSVRTTSKRTIAEFGIRKGDPIGVKVTLRGEDAHAFLDTALELADISKSQFDDTGNLSFGVEDHTDFPSQEYDPNIGIYGLDVTTTIVRPGYRVSKRDKATASIPSKHRMTAEDATAFLETNFDVEVTE.

This sequence belongs to the universal ribosomal protein uL5 family. Part of the 50S ribosomal subunit; contacts the 5S rRNA and probably tRNA. Forms a bridge to the 30S subunit in the 70S ribosome.

This is one of the proteins that bind and probably mediate the attachment of the 5S RNA into the large ribosomal subunit, where it forms part of the central protuberance. In the 70S ribosome it contacts protein S13 of the 30S subunit (bridge B1b), connecting the 2 subunits; this bridge is implicated in subunit movement. May contact the P site tRNA; the 5S rRNA and some of its associated proteins might help stabilize positioning of ribosome-bound tRNAs. This Halorubrum lacusprofundi (strain ATCC 49239 / DSM 5036 / JCM 8891 / ACAM 34) protein is Large ribosomal subunit protein uL5.